Reading from the N-terminus, the 108-residue chain is V-type proton ATPase subunit G (108 aa).

Over residues 48-60 the composition is skewed to basic and acidic residues; sequence YASKKEEEFKKSE. Residues 48–89 form a disordered region; sequence YASKKEEEFKKSESQASGIYSQAEAESKKQVQDTFASIETSS. Positions 79-89 are enriched in polar residues; the sequence is QDTFASIETSS.

It belongs to the V-ATPase G subunit family. As to quaternary structure, V-ATPase is a heteromultimeric enzyme composed of a peripheral catalytic V1 complex (components A to H) attached to an integral membrane V0 proton pore complex (components: a, c, c', c'', d, e, f and VOA1).

It is found in the vacuole membrane. Its function is as follows. Subunit of the V1 complex of vacuolar(H+)-ATPase (V-ATPase), a multisubunit enzyme composed of a peripheral complex (V1) that hydrolyzes ATP and a membrane integral complex (V0) that translocates protons. V-ATPase is responsible for acidifying and maintaining the pH of intracellular compartments. The sequence is that of V-type proton ATPase subunit G (vma10) from Schizosaccharomyces pombe (strain 972 / ATCC 24843) (Fission yeast).